The chain runs to 126 residues: Protein ApaG (126 aa).

The ApaG domain occupies serine 2–histidine 126.

The polypeptide is Protein ApaG (Pseudomonas fluorescens (strain ATCC BAA-477 / NRRL B-23932 / Pf-5)).